We begin with the raw amino-acid sequence, 1380 residues long: DNA-directed RNA polymerase subunit beta (1380 aa).

This sequence belongs to the RNA polymerase beta chain family. The RNAP catalytic core consists of 2 alpha, 1 beta, 1 beta' and 1 omega subunit. When a sigma factor is associated with the core the holoenzyme is formed, which can initiate transcription.

The enzyme catalyses RNA(n) + a ribonucleoside 5'-triphosphate = RNA(n+1) + diphosphate. Its function is as follows. DNA-dependent RNA polymerase catalyzes the transcription of DNA into RNA using the four ribonucleoside triphosphates as substrates. This Sinorhizobium fredii (strain NBRC 101917 / NGR234) protein is DNA-directed RNA polymerase subunit beta.